The sequence spans 608 residues: Malonate--CoA ligase (608 aa).

Belongs to the ATP-dependent AMP-binding enzyme family. In terms of tissue distribution, expressed in flowers.

It localises to the cytoplasm. The protein localises to the nucleus. It carries out the reaction malonate + ATP + CoA = malonyl-CoA + AMP + diphosphate. Its function is as follows. Malonate--CoA ligase that catalyzes the formation of malonyl-CoA directly from malonate and CoA. May be required for the detoxification of malonate. This Arabidopsis thaliana (Mouse-ear cress) protein is Malonate--CoA ligase (AAE13).